We begin with the raw amino-acid sequence, 321 residues long: Phosphatidylglycerol phospholipase C (321 aa).

In terms of domain architecture, GP-PDE spans 2-251 (VEIVGHRAFK…DDPIKARKLC (250 aa)). A helical; Anchor for type IV membrane protein membrane pass occupies residues 297–315 (WVHIKLCGWSIAYVIFLFL).

Belongs to the glycerophosphoryl diester phosphodiesterase family.

The protein localises to the mitochondrion membrane. It is found in the lipid droplet. It catalyses the reaction a 1,2-diacyl-sn-glycero-3-phospho-(1'-sn-glycerol) + H2O = sn-glycerol 3-phosphate + a 1,2-diacyl-sn-glycerol + H(+). Functionally, phosphatidylglycerol phospholipase required for the removal of excess phosphatidylglycerol (PG) via a phospholipase C-type degradation mechanism. The chain is Phosphatidylglycerol phospholipase C (PGC1) from Saccharomyces cerevisiae (strain ATCC 204508 / S288c) (Baker's yeast).